The sequence spans 757 residues: Catalase-peroxidase 2 (757 aa).

Residues 1-26 (MKHPLFNQKVLAGFVSMLLISGSAFA) form the signal peptide. A cross-link (tryptophyl-tyrosyl-methioninium (Trp-Tyr) (with M-274)) is located at residues 126-248 (WHSAGTYRTL…LGATHMGLIY (123 aa)). Residue His127 is the Proton acceptor of the active site. Positions 248-274 (YVNPEGPKGVPDPLGSAKNIRVAFERM) form a cross-link, tryptophyl-tyrosyl-methioninium (Tyr-Met) (with W-126). Position 289 (His289) interacts with heme b.

The protein belongs to the peroxidase family. Peroxidase/catalase subfamily. In terms of assembly, homodimer or homotetramer. Heme b is required as a cofactor. Formation of the three residue Trp-Tyr-Met cross-link is important for the catalase, but not the peroxidase activity of the enzyme.

It catalyses the reaction H2O2 + AH2 = A + 2 H2O. The enzyme catalyses 2 H2O2 = O2 + 2 H2O. In terms of biological role, bifunctional enzyme with both catalase and broad-spectrum peroxidase activity. This is Catalase-peroxidase 2 from Shewanella frigidimarina (strain NCIMB 400).